The sequence spans 785 residues: Cullin-3 (785 aa).

One can recognise a Cullin neddylation domain in the interval 715-777; it reads SRKHQADACI…REYLQRQADN (63 aa). Lys-729 participates in a covalent cross-link: Glycyl lysine isopeptide (Lys-Gly) (interchain with G-Cter in NEDD8).

This sequence belongs to the cullin family. As to quaternary structure, probable component of multiple cullin-RING-based BC3B (BTB-CUL3-BTB) E3 ubiquitin-protein ligase complexes formed by cul-3, rbx-1 and a variable BTB domain-containing protein as adapter and substrate recognition component. Interacts with btb1, btb2, btb3, nedd8 and pip1. Post-translationally, neddylated; enhancing the ubiquitin-ligase activity.

It is found in the cytoplasm. It functions in the pathway protein modification; protein ubiquitination. Probable core component of multiple cullin-RING-based BC3B (BTB-CUL3-BTB) E3 ubiquitin-protein ligase complexes which mediate the ubiquitination and subsequent proteasomal degradation of target proteins. As a scaffold protein may contribute to catalysis through positioning of the substrate and the ubiquitin-conjugating enzyme. The functional specificity of the BC3B complex depends on the substrate recognition component. Involved in ubiquitin-mediated degradation of btb3. The polypeptide is Cullin-3 (cul3) (Schizosaccharomyces pombe (strain 972 / ATCC 24843) (Fission yeast)).